A 920-amino-acid chain; its full sequence is Coatomer subunit beta'-1 (920 aa).

WD repeat units lie at residues 13–52 (QRSE…MVKS), 55–94 (VTEL…KIKV), 97–136 (AHAD…LCTQ), 140–180 (GHSH…PNFT), 183–224 (AHLK…CVQT), 227–266 (GHTH…LENT), 350–392 (TCDL…GSAL), and 460–500 (RIDV…SYFD). Positions 850–920 (LEQGDVLDEV…EQWVLTPPQE (71 aa)) are disordered. Residues 854 to 875 (DVLDEVGEEGEDGEEEEEEDRQ) show a composition bias toward acidic residues.

Belongs to the WD repeat COPB2 family. Oligomeric complex that consists of at least the alpha, beta, beta', gamma, delta, epsilon and zeta subunits.

The protein resides in the cytoplasm. Its subcellular location is the golgi apparatus membrane. It localises to the cytoplasmic vesicle. The protein localises to the COPI-coated vesicle membrane. Its function is as follows. The coatomer is a cytosolic protein complex that binds to dilysine motifs and reversibly associates with Golgi non-clathrin-coated vesicles, which further mediate biosynthetic protein transport from the ER, via the Golgi up to the trans Golgi network. Coatomer complex is required for budding from Golgi membranes, and is essential for the retrograde Golgi-to-ER transport of dilysine-tagged proteins. The sequence is that of Coatomer subunit beta'-1 from Arabidopsis thaliana (Mouse-ear cress).